A 169-amino-acid polypeptide reads, in one-letter code: Spore protein SP21 (169 aa).

Disordered regions lie at residues 1-21 (MADLSVRRGTGSTPQRTREWD) and 150-169 (QPKRIQVASSGTEQKEHIKA). The region spanning 47-159 (QGPPAFVPAF…QPKRIQVASS (113 aa)) is the sHSP domain.

The protein belongs to the small heat shock protein (HSP20) family.

Functionally, may stabilize cellular components during stress and spore formation. The chain is Spore protein SP21 (hspA) from Stigmatella aurantiaca (strain DW4/3-1).